A 254-amino-acid chain; its full sequence is Leucyl/phenylalanyl-tRNA--protein transferase (254 aa).

The segment covering 1 to 10 has biased composition (pro residues); sequence MSSQPPPLPW. The interval 1 to 28 is disordered; the sequence is MSSQPPPLPWLDPNQDFPPTSQAWDENS.

This sequence belongs to the L/F-transferase family.

It localises to the cytoplasm. It carries out the reaction N-terminal L-lysyl-[protein] + L-leucyl-tRNA(Leu) = N-terminal L-leucyl-L-lysyl-[protein] + tRNA(Leu) + H(+). The enzyme catalyses N-terminal L-arginyl-[protein] + L-leucyl-tRNA(Leu) = N-terminal L-leucyl-L-arginyl-[protein] + tRNA(Leu) + H(+). The catalysed reaction is L-phenylalanyl-tRNA(Phe) + an N-terminal L-alpha-aminoacyl-[protein] = an N-terminal L-phenylalanyl-L-alpha-aminoacyl-[protein] + tRNA(Phe). Functions in the N-end rule pathway of protein degradation where it conjugates Leu, Phe and, less efficiently, Met from aminoacyl-tRNAs to the N-termini of proteins containing an N-terminal arginine or lysine. This chain is Leucyl/phenylalanyl-tRNA--protein transferase, found in Albidiferax ferrireducens (strain ATCC BAA-621 / DSM 15236 / T118) (Rhodoferax ferrireducens).